The following is a 587-amino-acid chain: Capsid vertex component 2 (587 aa).

An interaction with major capsid protein/MCP region spans residues 1–53 (MAEYVNYVLGSLYVSDTATSTIPTDVRNFIAPPFPLNFWSGPTFTVRSNTRAD). The segment at 113 to 132 (SADAATPQVNASEADQRPDN) is disordered.

It belongs to the herpesviridae CVC2 protein family. As to quaternary structure, heterodimerizes with CVC1. Interacts with major capsid protein/MCP and triplex capsid protein 1/TRX1 at the pentamer vertices. Interacts with the large tegument protein/LTP.

Its subcellular location is the virion. It is found in the host nucleus. Its function is as follows. Capsid vertex-specific component that plays a role during viral DNA encapsidation, assuring correct genome cleavage and presumably stabilizing capsids that contain full-length viral genomes. Participates in the interaction between the capsid and the tegument through interaction with the large tegument protein/LTP. This chain is Capsid vertex component 2, found in Equine herpesvirus 1 (strain V592) (EHV-1).